The sequence spans 747 residues: Probable cyclic nucleotide-gated ion channel 6 (747 aa).

The Cytoplasmic segment spans residues 1–117 (MFDTCGPKGV…DKFLLLCNKL (117 aa)). A helical transmembrane segment spans residues 118 to 138 (FVASCILAVSVDPLFLYLPFI). Topologically, residues 139–150 (NDKAKCVGIDRK) are extracellular. A helical membrane pass occupies residues 151–171 (LAIIVTTIRTVIDSFYLFHMA). Over 172 to 205 (LRFRTAYVAPSSRVFGRGELVIDPAQIAKRYLQQ) the chain is Cytoplasmic. The chain crosses the membrane as a helical span at residues 206–226 (YFIIDLLSVLPVPQIIVWRFL). Over 227–239 (YTSRGANVLATKQ) the chain is Extracellular. A helical transmembrane segment spans residues 240–260 (ALRYIVLVQYIPRFLRMYPLS). Topologically, residues 261–280 (SELKRTAGVFAETAWAGAAY) are cytoplasmic. The helical transmembrane segment at 281 to 301 (YLLLYMLASHIVGALWYLLAL) threads the bilayer. The Extracellular segment spans residues 302-407 (ERNNDCWSKA…GQGLETSTYP (106 aa)). Residues 408 to 428 (GEVIFSITLAIAGLLLFALLI) form a helical membrane-spanning segment. The Cytoplasmic segment spans residues 429–747 (GNMQTYLQSL…PEPDFSAEDH (319 aa)). Residues 514 to 638 (LFEN…SRQV) and Asp-585 contribute to the a nucleoside 3',5'-cyclic phosphate site. The segment at 630 to 645 (FRRLHSRQVQHTFRFY) is calmodulin-binding. In terms of domain architecture, IQ spans 650 to 679 (RTWAACFMQAAWRRYIKRKKLEQLRKEEEE).

The protein belongs to the cyclic nucleotide-gated cation channel (TC 1.A.1.5) family. Homotetramer or heterotetramer.

Its subcellular location is the cell membrane. Probable cyclic nucleotide-gated ion channel. This chain is Probable cyclic nucleotide-gated ion channel 6 (CNGC6), found in Arabidopsis thaliana (Mouse-ear cress).